The following is a 22-amino-acid chain: Chitin-binding protein 3 (22 aa).

In terms of processing, glycosylated; contains 2.5% carbohydrates.

In terms of biological role, chitin-binding protein. Has antifungal activity against F.solani, F.oxysporum, C.musae and C.gloesporoides but not against P.oligandrum. Depending on concentration the antifungal activity can be fungistatic or fungicidal. Inhibits both spore germination and mycelial growth in F.solani at a concentration of 0.1 mg/ml. Has antifungal activity against C.krusei, C.albicans, C.tropicalis and C.parapsilosis. Has no chitinase, beta-glucanase or hemagglutinating activity. Acts as a flocculent. The sequence is that of Chitin-binding protein 3 from Moringa oleifera (Horseradish tree).